We begin with the raw amino-acid sequence, 250 residues long: Ribosomal RNA small subunit methyltransferase J (250 aa).

S-adenosyl-L-methionine contacts are provided by residues 101–102, 117–118, 153–154, and D171; these read RD, ER, and SS.

Belongs to the methyltransferase superfamily. RsmJ family.

The protein localises to the cytoplasm. The catalysed reaction is guanosine(1516) in 16S rRNA + S-adenosyl-L-methionine = N(2)-methylguanosine(1516) in 16S rRNA + S-adenosyl-L-homocysteine + H(+). Functionally, specifically methylates the guanosine in position 1516 of 16S rRNA. The protein is Ribosomal RNA small subunit methyltransferase J of Cronobacter sakazakii (strain ATCC BAA-894) (Enterobacter sakazakii).